The chain runs to 88 residues: Small ribosomal subunit protein bS18B (88 aa).

This sequence belongs to the bacterial ribosomal protein bS18 family. Part of the 30S ribosomal subunit. Forms a tight heterodimer with protein bS6.

Its function is as follows. Binds as a heterodimer with protein bS6 to the central domain of the 16S rRNA, where it helps stabilize the platform of the 30S subunit. This chain is Small ribosomal subunit protein bS18B (rpsR2), found in Mycobacterium bovis (strain ATCC BAA-935 / AF2122/97).